The chain runs to 476 residues: Oogenesin-2 (476 aa).

The LRR 1; degenerate repeat unit spans residues Arg97 to Gly121. Residues His176–His200 form an LRR 2; degenerate repeat. One copy of the LRR 3; degenerate repeat lies at Ala201–Gln226. The stretch at Met227–Thr264 is one LRR 4; degenerate repeat. LRR repeat units follow at residues Phe265 to Leu285, Lys286 to Arg317, Arg342 to Gln369, and Cys370 to His394.

Belongs to the PRAME family. In terms of tissue distribution, expressed in ovary, specifically in oocytes. Detected in follicles with two layers of granulosa cells, and are present in early as well as large antral follicles.

The polypeptide is Oogenesin-2 (Mus musculus (Mouse)).